A 399-amino-acid chain; its full sequence is MKEKVVLAYSGGLDTSIIIPWLKENYEDIDVIAVCGNVGQEDKMEDVYEKALQSGASKAYVDDISEEFVTETIFKAVKAEAKYEGKYLLGTSLARPIIAKKLVEVAHKEGAKYICHGCTGKGNDQVRFEATIAALDPTIKVIAPWRIWDIKSREDAIDYAEKHNIKVTATKAKIYSVDANLWHVSTEGGDIEHLENEHKKDVYKQCVDPEDACDVAEYVEVYFEKGVPKKVNGEELSPVALIHKLNELGCKHGIGVIDIVENRLVGMKSRGIYETPGGTILYEAHNILESATLDKDTLHFKQMVSYKYGELIYNGLWYCKLRESIDAFMEQTQDNVTGTVKVKLYKGNIKPAGIFTENALYDEGISSFGNSELYDHKDAEGFINLFTLPLKIRAMKAGK.

8–16 (AYSGGLDTS) lines the ATP pocket. The L-citrulline site is built by tyrosine 87 and serine 92. An ATP-binding site is contributed by glycine 117. Residues threonine 119, asparagine 123, and aspartate 124 each coordinate L-aspartate. Asparagine 123 is an L-citrulline binding site. 5 residues coordinate L-citrulline: arginine 127, serine 176, serine 185, glutamate 261, and tyrosine 273.

It belongs to the argininosuccinate synthase family. Type 1 subfamily. As to quaternary structure, homotetramer.

It localises to the cytoplasm. It catalyses the reaction L-citrulline + L-aspartate + ATP = 2-(N(omega)-L-arginino)succinate + AMP + diphosphate + H(+). It functions in the pathway amino-acid biosynthesis; L-arginine biosynthesis; L-arginine from L-ornithine and carbamoyl phosphate: step 2/3. In Clostridioides difficile (strain 630) (Peptoclostridium difficile), this protein is Argininosuccinate synthase.